The sequence spans 122 residues: Large ribosomal subunit protein uL14 (122 aa).

This sequence belongs to the universal ribosomal protein uL14 family. In terms of assembly, part of the 50S ribosomal subunit. Forms a cluster with proteins L3 and L19. In the 70S ribosome, L14 and L19 interact and together make contacts with the 16S rRNA in bridges B5 and B8.

Functionally, binds to 23S rRNA. Forms part of two intersubunit bridges in the 70S ribosome. The protein is Large ribosomal subunit protein uL14 of Halorhodospira halophila (strain DSM 244 / SL1) (Ectothiorhodospira halophila (strain DSM 244 / SL1)).